Here is a 489-residue protein sequence, read N- to C-terminus: Rhamnulokinase (489 aa).

13-17 (ASSGR) contacts ATP. An intrachain disulfide couples cysteine 68 to cysteine 222. Substrate contacts are provided by residues glycine 83 and 236–238 (HDT). Aspartate 237 (proton acceptor) is an active-site residue. Threonine 259 is a binding site for ATP. Asparagine 296 is a binding site for substrate. Residue glutamine 304 participates in ATP binding. Cysteine 353 and cysteine 370 form a disulfide bridge. Glycine 402 provides a ligand contact to ATP. A disulfide bond links cysteine 413 and cysteine 417.

It belongs to the rhamnulokinase family. In terms of assembly, monomer. It depends on Mg(2+) as a cofactor.

It catalyses the reaction L-rhamnulose + ATP = L-rhamnulose 1-phosphate + ADP + H(+). It participates in carbohydrate degradation; L-rhamnose degradation; glycerone phosphate from L-rhamnose: step 2/3. Involved in the catabolism of L-rhamnose (6-deoxy-L-mannose). Catalyzes the transfer of the gamma-phosphate group from ATP to the 1-hydroxyl group of L-rhamnulose to yield L-rhamnulose 1-phosphate. The chain is Rhamnulokinase from Escherichia coli O157:H7.